The primary structure comprises 583 residues: Multidrug transporter QDR2 (583 aa).

Residues 23-46 (EKYDGPDLSEVDSEDNDKMIKTNE) are disordered. N60 carries an N-linked (GlcNAc...) asparagine glycan. Residues 88-108 (AYTGLFSTMAGAIYYPVLSVI) traverse the membrane as a helical segment. The N-linked (GlcNAc...) asparagine glycan is linked to N120. 5 helical membrane-spanning segments follow: residues 121–141 (ITVV…GGLA), 148–168 (PVVL…ACAQ), 178–198 (CLQA…IGDV), 208–228 (VGYI…IGAG), and 238–258 (IFWF…IMLP). N-linked (GlcNAc...) asparagine glycosylation is present at N267. A run of 2 helical transmembrane segments spans residues 323–342 (ILLV…QTAL) and 354–374 (VAKI…SIVT). An N-linked (GlcNAc...) asparagine glycan is attached at N380. Transmembrane regions (helical) follow at residues 432–452 (HAAF…GWCI), 458–478 (LASV…ILTF), 493–513 (TATG…IGCL), and 524–544 (GVFT…FYLL).

This sequence belongs to the major facilitator superfamily. CAR1 family.

It is found in the cell membrane. In terms of biological role, multidrug resistance transporter involved in resistance to the antifungal drugs miconazole, tioconazole, clotrimazole, and ketoconazole; as well as to quinidine. Decreases the intracellular accumulation of clotrimazole in and plays a role in the extrusion of this antifungal from preloaded cells. In Candida glabrata (strain ATCC 2001 / BCRC 20586 / JCM 3761 / NBRC 0622 / NRRL Y-65 / CBS 138) (Yeast), this protein is Multidrug transporter QDR2.